The sequence spans 109 residues: Ribonuclease P protein component (109 aa).

The protein belongs to the RnpA family. In terms of assembly, consists of a catalytic RNA component (M1 or rnpB) and a protein subunit.

It catalyses the reaction Endonucleolytic cleavage of RNA, removing 5'-extranucleotides from tRNA precursor.. RNaseP catalyzes the removal of the 5'-leader sequence from pre-tRNA to produce the mature 5'-terminus. It can also cleave other RNA substrates such as 4.5S RNA. The protein component plays an auxiliary but essential role in vivo by binding to the 5'-leader sequence and broadening the substrate specificity of the ribozyme. This chain is Ribonuclease P protein component, found in Streptococcus agalactiae serotype III (strain NEM316).